Reading from the N-terminus, the 594-residue chain is Actin-histidine N-methyltransferase (594 aa).

The interval 1–22 (MGKKSRVKTQKSGTGATATVSP) is disordered. Residues 10–20 (QKSGTGATATV) are compositionally biased toward polar residues. Residues Arg75, 104–106 (EGF), Arg254, 275–279 (DMCNH), and 325–327 (SGF) contribute to the S-adenosyl-L-methionine site. The SET domain maps to 94 to 314 (EGFEMVNFKE…AGEQIYIFYG (221 aa)). A Phosphoserine modification is found at Ser513. Positions 549 to 594 (ENGLVNGENSIPNGTRSENESLNQESKRAVEDAKGSSSDSTAGVKE) are disordered. Polar residues predominate over residues 555–572 (GENSIPNGTRSENESLNQ). A compositionally biased stretch (basic and acidic residues) spans 573–582 (ESKRAVEDAK). Residues 583-594 (GSSSDSTAGVKE) show a composition bias toward polar residues.

Belongs to the class V-like SAM-binding methyltransferase superfamily. SETD3 actin-histidine methyltransferase family. As to quaternary structure, interacts with MYOD1. In terms of processing, phosphorylated by GSK3B, which is required for recognition by the SCF(FBXW7) complex and subsequent degradation. Post-translationally, ubiquitinated by the SCF(FBXW7) complex following phosphorylation by GSK3B, leading to its degradation by the proteasome.

The protein localises to the cytoplasm. It localises to the nucleus. The catalysed reaction is L-histidyl-[protein] + S-adenosyl-L-methionine = N(tele)-methyl-L-histidyl-[protein] + S-adenosyl-L-homocysteine + H(+). Protein-histidine N-methyltransferase that specifically mediates 3-methylhistidine (tele-methylhistidine) methylation of actin at 'His-73'. Histidine methylation of actin is required for smooth muscle contraction of the laboring uterus during delivery. Does not have protein-lysine N-methyltransferase activity and probably only catalyzes histidine methylation of actin. This is Actin-histidine N-methyltransferase from Homo sapiens (Human).